The sequence spans 443 residues: Chromosomal replication initiator protein DnaA (443 aa).

The segment at 1-76 is domain I, interacts with DnaA modulators; it reads MMDAWPRCLE…GNGEVALAVG (76 aa). The domain II stretch occupies residues 76–105; sequence GSRPRAPEPAPAPVAATIAPQAAPIAPFAG. Positions 106 to 323 are domain III, AAA+ region; the sequence is NLDSHYTFAN…GALNTLVARA (218 aa). Residues glycine 151, glycine 153, lysine 154, and threonine 155 each coordinate ATP. The interval 324 to 443 is domain IV, binds dsDNA; that stretch reads NFTGRSITVE…WEKLIRKLSE (120 aa).

The protein belongs to the DnaA family. In terms of assembly, oligomerizes as a right-handed, spiral filament on DNA at oriC.

The protein localises to the cytoplasm. Plays an essential role in the initiation and regulation of chromosomal replication. ATP-DnaA binds to the origin of replication (oriC) to initiate formation of the DNA replication initiation complex once per cell cycle. Binds the DnaA box (a 9 base pair repeat at the origin) and separates the double-stranded (ds)DNA. Forms a right-handed helical filament on oriC DNA; dsDNA binds to the exterior of the filament while single-stranded (ss)DNA is stabiized in the filament's interior. The ATP-DnaA-oriC complex binds and stabilizes one strand of the AT-rich DNA unwinding element (DUE), permitting loading of DNA polymerase. After initiation quickly degrades to an ADP-DnaA complex that is not apt for DNA replication. Binds acidic phospholipids. This chain is Chromosomal replication initiator protein DnaA, found in Xanthomonas oryzae pv. oryzae (strain KACC10331 / KXO85).